Here is a 97-residue protein sequence, read N- to C-terminus: Small ribosomal subunit protein bS18c (97 aa).

This sequence belongs to the bacterial ribosomal protein bS18 family. Part of the 30S ribosomal subunit.

It is found in the plastid. It localises to the chloroplast. The protein is Small ribosomal subunit protein bS18c of Oenothera glazioviana (Large-flowered evening primrose).